Here is a 287-residue protein sequence, read N- to C-terminus: L-cysteine S-thiosulfotransferase subunit SoxA (287 aa).

The signal sequence occupies residues 1 to 26 (MKTMTGRLVAAALVCGGAFSGAAVSA). The region spanning 74–168 (DDFENSGMVF…AMVALIASVS (95 aa)) is the Cytochrome c domain. Positions 102, 105, 106, 140, 203, 206, and 207 each coordinate heme c. R244 is a binding site for substrate. C248 provides a ligand contact to heme c. Catalysis depends on C248, which acts as the Cysteine persulfide intermediate.

Belongs to the SoxA family. In terms of assembly, heterodimer of SoxA and SoxX. It depends on heme c as a cofactor. In terms of processing, cysteine persulfide at Cys-248.

It localises to the periplasm. The enzyme catalyses L-cysteinyl-[SoxY protein] + thiosulfate + 2 Fe(III)-[cytochrome c] = S-sulfosulfanyl-L-cysteinyl-[SoxY protein] + 2 Fe(II)-[cytochrome c] + 2 H(+). It carries out the reaction S-sulfanyl-L-cysteinyl-[SoxY protein] + thiosulfate + 2 Fe(III)-[cytochrome c] = S-(2-sulfodisulfanyl)-L-cysteinyl-[SoxY protein] + 2 Fe(II)-[cytochrome c] + 2 H(+). C-type diheme cytochrome, which is part of the SoxAX cytochrome complex involved in sulfur oxidation. The SoxAX complex catalyzes the formation of a heterodisulfide bond between the conserved cysteine residue on a sulfur carrier SoxYZ complex subunit SoxY and thiosulfate or other inorganic sulfur substrates. This leads to the liberation of two electrons, which may be transferred from the SoxAX complex to another cytochrome c and which then may be used for reductive CO(2) fixation. This Rhodovulum sulfidophilum (Rhodobacter sulfidophilus) protein is L-cysteine S-thiosulfotransferase subunit SoxA.